The following is a 174-amino-acid chain: Shikimate kinase 2 (174 aa).

Residue 12–17 (GCGKTT) coordinates ATP. Mg(2+) is bound by residues threonine 16 and aspartate 32. Substrate-binding residues include aspartate 34, arginine 58, and glycine 79. The interval 112–126 (QAAPEEDLRPTLTGK) is LID domain. ATP is bound at residue arginine 120. Arginine 139 is a substrate binding site.

The protein belongs to the shikimate kinase family. AroL subfamily. In terms of assembly, monomer. Mg(2+) is required as a cofactor.

It is found in the cytoplasm. It catalyses the reaction shikimate + ATP = 3-phosphoshikimate + ADP + H(+). It functions in the pathway metabolic intermediate biosynthesis; chorismate biosynthesis; chorismate from D-erythrose 4-phosphate and phosphoenolpyruvate: step 5/7. In terms of biological role, catalyzes the specific phosphorylation of the 3-hydroxyl group of shikimic acid using ATP as a cosubstrate. In Escherichia coli O1:K1 / APEC, this protein is Shikimate kinase 2.